A 459-amino-acid chain; its full sequence is Cysteine--tRNA ligase (459 aa).

C28 provides a ligand contact to Zn(2+). The 'HIGH' region signature appears at 30 to 40 (ITIYDLCHIGH). C209, H234, and E238 together coordinate Zn(2+). The short motif at 266 to 270 (KMSKS) is the 'KMSKS' region element. Residue K269 coordinates ATP.

It belongs to the class-I aminoacyl-tRNA synthetase family. Monomer. The cofactor is Zn(2+).

The protein resides in the cytoplasm. The enzyme catalyses tRNA(Cys) + L-cysteine + ATP = L-cysteinyl-tRNA(Cys) + AMP + diphosphate. The polypeptide is Cysteine--tRNA ligase (Shewanella sediminis (strain HAW-EB3)).